The chain runs to 170 residues: Peptide deformylase (170 aa).

Residues Cys91 and His133 each coordinate Fe cation. The active site involves Glu134. His137 lines the Fe cation pocket.

It belongs to the polypeptide deformylase family. Fe(2+) serves as cofactor.

It catalyses the reaction N-terminal N-formyl-L-methionyl-[peptide] + H2O = N-terminal L-methionyl-[peptide] + formate. Functionally, removes the formyl group from the N-terminal Met of newly synthesized proteins. Requires at least a dipeptide for an efficient rate of reaction. N-terminal L-methionine is a prerequisite for activity but the enzyme has broad specificity at other positions. This chain is Peptide deformylase, found in Aeromonas salmonicida (strain A449).